Reading from the N-terminus, the 314-residue chain is Inactive protein FRIGIDA (314 aa).

The segment covering 1–18 (MSNYPPTVAAQPTTTANP) has biased composition (low complexity). Residues 1-31 (MSNYPPTVAAQPTTTANPLLQRHQSEQRRRE) form a disordered region. Residues 67–97 (VAVETFKRQFDDLQKHIESIENAIDSKLESN) are a coiled coil.

Belongs to the Frigida family.

The protein localises to the nucleus. This chain is Inactive protein FRIGIDA (FRI), found in Arabidopsis thaliana (Mouse-ear cress).